We begin with the raw amino-acid sequence, 556 residues long: Oxygen-dependent choline dehydrogenase (556 aa).

6–35 (DYIIIGAGSAGNVLAARLTEDPGVTVLLLE) provides a ligand contact to FAD. Histidine 475 serves as the catalytic Proton acceptor.

It belongs to the GMC oxidoreductase family. The cofactor is FAD.

The catalysed reaction is choline + A = betaine aldehyde + AH2. It carries out the reaction betaine aldehyde + NAD(+) + H2O = glycine betaine + NADH + 2 H(+). Its pathway is amine and polyamine biosynthesis; betaine biosynthesis via choline pathway; betaine aldehyde from choline (cytochrome c reductase route): step 1/1. In terms of biological role, involved in the biosynthesis of the osmoprotectant glycine betaine. Catalyzes the oxidation of choline to betaine aldehyde and betaine aldehyde to glycine betaine at the same rate. This is Oxygen-dependent choline dehydrogenase from Xanthomonas axonopodis pv. citri (strain 306).